Consider the following 1392-residue polypeptide: DNA-directed RNA polymerase subunit beta'' (1392 aa).

C224, C295, C302, and C305 together coordinate Zn(2+).

This sequence belongs to the RNA polymerase beta' chain family. RpoC2 subfamily. In terms of assembly, in plastids the minimal PEP RNA polymerase catalytic core is composed of four subunits: alpha, beta, beta', and beta''. When a (nuclear-encoded) sigma factor is associated with the core the holoenzyme is formed, which can initiate transcription. Requires Zn(2+) as cofactor.

The protein resides in the plastid. Its subcellular location is the chloroplast. The catalysed reaction is RNA(n) + a ribonucleoside 5'-triphosphate = RNA(n+1) + diphosphate. Functionally, DNA-dependent RNA polymerase catalyzes the transcription of DNA into RNA using the four ribonucleoside triphosphates as substrates. The protein is DNA-directed RNA polymerase subunit beta'' of Solanum bulbocastanum (Wild potato).